The chain runs to 742 residues: Collectin-12 (742 aa).

The Cytoplasmic segment spans residues 1-37; that stretch reads MKDDFAEEEEVHSFGYKRFGIQEGTQCTKCKNNWALK. A helical; Signal-anchor for type II membrane protein membrane pass occupies residues 38-58; the sequence is LSIILLYILCALLTITVAILG. The Extracellular segment spans residues 59–742; that stretch reads YKVVEKMDNV…DRERELAITL (684 aa). Asn67 is a glycosylation site (N-linked (GlcNAc...) asparagine). The stretch at 73–141 forms a coiled coil; sequence ETSRQTYDDK…NKDTLEKLQA (69 aa). 2 N-linked (GlcNAc...) asparagine glycosylation sites follow: Asn159 and Asn168. A coiled-coil region spans residues 215–254; the sequence is QQRNLITNLQRSVDDTSQAIQRIKNDFQNLQQVFLQAKKD. N-linked (GlcNAc...) asparagine glycosylation occurs at Asn271. Positions 296–328 form a coiled coil; that stretch reads QMDNITTASQANEQNLKDLQDVHRDAENRTAAK. The tract at residues 439–591 is disordered; it reads TILQGPPGPR…PPGPSGAAVP (153 aa). Collagen-like domains lie at 443-502 and 527-586; these read GPPG…KGSK and GPPG…PGPS. A compositionally biased stretch (low complexity) spans 501 to 514; the sequence is SKGLQGSKGSRGSP. Residues 516-532 show a composition bias toward pro residues; sequence KPGPQGPSGDPGPPGPP. Low complexity predominate over residues 534 to 556; that stretch reads KDGLPGPQGPPGFQGLQGTVGEP. Disulfide bonds link Cys607–Cys618, Cys635–Cys730, and Cys708–Cys722. The 118-residue stretch at 614–731 folds into the C-type lectin domain; sequence FTDKCYYFST…CEDMNHFICE (118 aa). Residues Phe644, Asn646, Glu650, Asp670, and Glu674 each coordinate Ca(2+). Positions 691, 694, and 696 each coordinate a carbohydrate. Residues Gln694, Asp696, Asn697, Glu706, Asp707, Asn718, Asp719, and Glu731 each coordinate Ca(2+). Glu706 provides a ligand contact to a carbohydrate. 2 residues coordinate a carbohydrate: Asn718 and Asp719.

In terms of assembly, the extracellular domain forms a stable trimer. The extracellular domain interacts with fibrillar amyloid-beta peptide.

The protein localises to the membrane. In terms of biological role, scavenger receptor that displays several functions associated with host defense. Promotes binding and phagocytosis of Gram-positive, Gram-negative bacteria and yeast. Mediates the recognition, internalization and degradation of oxidatively modified low density lipoprotein (oxLDL) by vascular endothelial cells. Binds to several carbohydrates including Gal-type ligands, D-galactose, L- and D-fucose, GalNAc, T and Tn antigens in a calcium-dependent manner and internalizes specifically GalNAc in nurse-like cells. Also binds to sialyl Lewis X or a trisaccharide and asialo-orosomucoid (ASOR). This is Collectin-12 (COLEC12) from Bos taurus (Bovine).